The primary structure comprises 202 residues: Transcription factor IBH1 (202 aa).

Positions 1 to 16 (MDAKRTPPPPTPPNPN) are enriched in pro residues. Residues 1–33 (MDAKRTPPPPTPPNPNPSVIGSGAAADGGGFGR) form a disordered region. Residues 136–185 (TSAAARAVPPPPRQQGEPPRADALRRLVPGGAGMEYSSLLEETADYLRSL) enclose the bHLH domain.

This sequence belongs to the bHLH protein family. As to quaternary structure, interacts with ILI1.

Atypical and probable non DNA-binding bHLH transcription factor that acts as a negative regulator of cell elongation and plant development. Binds the transcription factor ILI1 and forms a heterodimer of antagonistic bHLH transcription factors that function downstream of BZR1 to mediate brassinosteroid regulation of cell elongation and lamina inclination. This is Transcription factor IBH1 (IBH1) from Oryza sativa subsp. indica (Rice).